The sequence spans 311 residues: Catechol 1,2-dioxygenase 1 (311 aa).

Fe cation is bound by residues tyrosine 164, tyrosine 200, histidine 224, and histidine 226.

The protein belongs to the intradiol ring-cleavage dioxygenase family. In terms of assembly, homodimer. Fe(3+) is required as a cofactor.

The catalysed reaction is catechol + O2 = cis,cis-muconate + 2 H(+). It participates in aromatic compound metabolism; beta-ketoadipate pathway; 5-oxo-4,5-dihydro-2-furylacetate from catechol: step 1/3. In terms of biological role, can cleave 4-methyl-, 4-chloro-, and 3-methoxycatechol at lower rates than catechol, but has no activity with 4-nitrocatechol or protocatechuic acid. In Acinetobacter lwoffii, this protein is Catechol 1,2-dioxygenase 1 (catA1).